A 486-amino-acid chain; its full sequence is Protein nucleotidyltransferase YdiU (486 aa).

Residues glycine 90, glycine 92, arginine 93, lysine 113, aspartate 125, glycine 126, arginine 176, and arginine 183 each coordinate ATP. Catalysis depends on aspartate 252, which acts as the Proton acceptor. Mg(2+)-binding residues include asparagine 253 and aspartate 262. Aspartate 262 contacts ATP.

It belongs to the SELO family. It depends on Mg(2+) as a cofactor. Mn(2+) is required as a cofactor.

It catalyses the reaction L-seryl-[protein] + ATP = 3-O-(5'-adenylyl)-L-seryl-[protein] + diphosphate. The enzyme catalyses L-threonyl-[protein] + ATP = 3-O-(5'-adenylyl)-L-threonyl-[protein] + diphosphate. It carries out the reaction L-tyrosyl-[protein] + ATP = O-(5'-adenylyl)-L-tyrosyl-[protein] + diphosphate. The catalysed reaction is L-histidyl-[protein] + UTP = N(tele)-(5'-uridylyl)-L-histidyl-[protein] + diphosphate. It catalyses the reaction L-seryl-[protein] + UTP = O-(5'-uridylyl)-L-seryl-[protein] + diphosphate. The enzyme catalyses L-tyrosyl-[protein] + UTP = O-(5'-uridylyl)-L-tyrosyl-[protein] + diphosphate. Its function is as follows. Nucleotidyltransferase involved in the post-translational modification of proteins. It can catalyze the addition of adenosine monophosphate (AMP) or uridine monophosphate (UMP) to a protein, resulting in modifications known as AMPylation and UMPylation. The sequence is that of Protein nucleotidyltransferase YdiU from Pseudomonas putida (strain GB-1).